A 306-amino-acid chain; its full sequence is 4-hydroxy-3-methylbut-2-enyl diphosphate reductase (306 aa).

A [4Fe-4S] cluster-binding site is contributed by C12. 2 residues coordinate (2E)-4-hydroxy-3-methylbut-2-enyl diphosphate: H41 and H74. H41 and H74 together coordinate dimethylallyl diphosphate. Residues H41 and H74 each contribute to the isopentenyl diphosphate site. A [4Fe-4S] cluster-binding site is contributed by C96. H124 contacts (2E)-4-hydroxy-3-methylbut-2-enyl diphosphate. H124 provides a ligand contact to dimethylallyl diphosphate. Isopentenyl diphosphate is bound at residue H124. The Proton donor role is filled by E126. T164 provides a ligand contact to (2E)-4-hydroxy-3-methylbut-2-enyl diphosphate. Residue C194 coordinates [4Fe-4S] cluster. Positions 222, 223, 224, and 266 each coordinate (2E)-4-hydroxy-3-methylbut-2-enyl diphosphate. Dimethylallyl diphosphate-binding residues include S222, S223, N224, and S266. Residues S222, S223, N224, and S266 each coordinate isopentenyl diphosphate.

The protein belongs to the IspH family. The cofactor is [4Fe-4S] cluster.

The enzyme catalyses isopentenyl diphosphate + 2 oxidized [2Fe-2S]-[ferredoxin] + H2O = (2E)-4-hydroxy-3-methylbut-2-enyl diphosphate + 2 reduced [2Fe-2S]-[ferredoxin] + 2 H(+). The catalysed reaction is dimethylallyl diphosphate + 2 oxidized [2Fe-2S]-[ferredoxin] + H2O = (2E)-4-hydroxy-3-methylbut-2-enyl diphosphate + 2 reduced [2Fe-2S]-[ferredoxin] + 2 H(+). Its pathway is isoprenoid biosynthesis; dimethylallyl diphosphate biosynthesis; dimethylallyl diphosphate from (2E)-4-hydroxy-3-methylbutenyl diphosphate: step 1/1. The protein operates within isoprenoid biosynthesis; isopentenyl diphosphate biosynthesis via DXP pathway; isopentenyl diphosphate from 1-deoxy-D-xylulose 5-phosphate: step 6/6. In terms of biological role, catalyzes the conversion of 1-hydroxy-2-methyl-2-(E)-butenyl 4-diphosphate (HMBPP) into a mixture of isopentenyl diphosphate (IPP) and dimethylallyl diphosphate (DMAPP). Acts in the terminal step of the DOXP/MEP pathway for isoprenoid precursor biosynthesis. This chain is 4-hydroxy-3-methylbut-2-enyl diphosphate reductase, found in Dechloromonas aromatica (strain RCB).